The chain runs to 122 residues: Small ribosomal subunit protein bS6 (122 aa).

The segment at 96 to 122 (ETAPSPMMKAVQKEDAAKSHRTEAPAA) is disordered. The span at 106–122 (VQKEDAAKSHRTEAPAA) shows a compositional bias: basic and acidic residues.

This sequence belongs to the bacterial ribosomal protein bS6 family.

In terms of biological role, binds together with bS18 to 16S ribosomal RNA. The chain is Small ribosomal subunit protein bS6 from Herminiimonas arsenicoxydans.